Reading from the N-terminus, the 1482-residue chain is Chromosome partition protein MukB (1482 aa).

ATP is bound at residue 34–41 (GGNGAGKS). Coiled coils occupy residues 326-416 (LEAD…AIQY), 509-603 (RHLA…RAPV), 780-805 (RAAR…ATLS), 835-923 (EAEI…AKLE), 979-1116 (LSGN…AKAG), and 1210-1265 (EAIE…LQSV). The segment at 666-783 (PGGAEDSRLN…TLPLFGRAAR (118 aa)) is flexible hinge.

The protein belongs to the SMC family. MukB subfamily. As to quaternary structure, homodimerization via its hinge domain. Binds to DNA via its C-terminal region. Interacts, and probably forms a ternary complex, with MukE and MukF via its C-terminal region. The complex formation is stimulated by calcium or magnesium. Interacts with tubulin-related protein FtsZ.

The protein resides in the cytoplasm. Its subcellular location is the nucleoid. In terms of biological role, plays a central role in chromosome condensation, segregation and cell cycle progression. Functions as a homodimer, which is essential for chromosome partition. Involved in negative DNA supercoiling in vivo, and by this means organize and compact chromosomes. May achieve or facilitate chromosome segregation by condensation DNA from both sides of a centrally located replisome during cell division. The polypeptide is Chromosome partition protein MukB (Enterobacter sp. (strain 638)).